Here is a 205-residue protein sequence, read N- to C-terminus: Iron-sulfur assembly protein 2 (205 aa).

Fe cation contacts are provided by Cys131, Cys196, and Cys198.

Belongs to the HesB/IscA family.

Its subcellular location is the mitochondrion matrix. Its function is as follows. Involved in the assembly of mitochondrial and cytoplasmic iron-sulfur proteins. Probably involved in the binding of an intermediate of Fe/S cluster assembly. The sequence is that of Iron-sulfur assembly protein 2 (isa2) from Schizosaccharomyces pombe (strain 972 / ATCC 24843) (Fission yeast).